We begin with the raw amino-acid sequence, 158 residues long: NADH-quinone oxidoreductase subunit B (158 aa).

[4Fe-4S] cluster-binding residues include cysteine 37, cysteine 38, cysteine 102, and cysteine 132.

It belongs to the complex I 20 kDa subunit family. As to quaternary structure, NDH-1 is composed of 14 different subunits. Subunits NuoB, C, D, E, F, and G constitute the peripheral sector of the complex. [4Fe-4S] cluster is required as a cofactor.

The protein localises to the cell inner membrane. The catalysed reaction is a quinone + NADH + 5 H(+)(in) = a quinol + NAD(+) + 4 H(+)(out). In terms of biological role, NDH-1 shuttles electrons from NADH, via FMN and iron-sulfur (Fe-S) centers, to quinones in the respiratory chain. Couples the redox reaction to proton translocation (for every two electrons transferred, four hydrogen ions are translocated across the cytoplasmic membrane), and thus conserves the redox energy in a proton gradient. The chain is NADH-quinone oxidoreductase subunit B from Bordetella petrii (strain ATCC BAA-461 / DSM 12804 / CCUG 43448).